The chain runs to 294 residues: Probable 2-(5''-triphosphoribosyl)-3'-dephosphocoenzyme-A synthase (294 aa).

The protein belongs to the CitG/MdcB family.

It carries out the reaction 3'-dephospho-CoA + ATP = 2'-(5''-triphospho-alpha-D-ribosyl)-3'-dephospho-CoA + adenine. This Streptococcus pyogenes serotype M2 (strain MGAS10270) protein is Probable 2-(5''-triphosphoribosyl)-3'-dephosphocoenzyme-A synthase.